We begin with the raw amino-acid sequence, 1370 residues long: DNA-directed RNA polymerase subunit beta (1370 aa).

The protein belongs to the RNA polymerase beta chain family. The RNAP catalytic core consists of 2 alpha, 1 beta, 1 beta' and 1 omega subunit. When a sigma factor is associated with the core the holoenzyme is formed, which can initiate transcription.

The catalysed reaction is RNA(n) + a ribonucleoside 5'-triphosphate = RNA(n+1) + diphosphate. In terms of biological role, DNA-dependent RNA polymerase catalyzes the transcription of DNA into RNA using the four ribonucleoside triphosphates as substrates. The chain is DNA-directed RNA polymerase subunit beta from Syntrophobacter fumaroxidans (strain DSM 10017 / MPOB).